A 284-amino-acid polypeptide reads, in one-letter code: Avenin-like b6 (284 aa).

Residues 1-18 (MKVFILALLALAATTAIA) form the signal peptide.

It belongs to the prolamin family. Contains disulfide bonds.

Seed storage protein. Might be integrated via inter-chain disulfide bonds within the glutenin polymer. This chain is Avenin-like b6, found in Triticum aestivum (Wheat).